The following is a 359-amino-acid chain: Peptide chain release factor 1 (359 aa).

N5-methylglutamine is present on glutamine 233.

It belongs to the prokaryotic/mitochondrial release factor family. Post-translationally, methylated by PrmC. Methylation increases the termination efficiency of RF1.

It localises to the cytoplasm. Functionally, peptide chain release factor 1 directs the termination of translation in response to the peptide chain termination codons UAG and UAA. This Clostridium acetobutylicum (strain ATCC 824 / DSM 792 / JCM 1419 / IAM 19013 / LMG 5710 / NBRC 13948 / NRRL B-527 / VKM B-1787 / 2291 / W) protein is Peptide chain release factor 1.